The chain runs to 602 residues: Aspartate--tRNA(Asp/Asn) ligase (602 aa).

Glu175 serves as a coordination point for L-aspartate. Residues 199-202 are aspartate; that stretch reads QIFK. Residue Arg221 participates in L-aspartate binding. Residues 221-223 and Gln230 each bind ATP; that span reads RDE. An L-aspartate-binding site is contributed by His458. ATP is bound at residue Glu492. L-aspartate is bound at residue Arg499. 544-547 lines the ATP pocket; sequence GLDR.

It belongs to the class-II aminoacyl-tRNA synthetase family. Type 1 subfamily. In terms of assembly, homodimer.

It localises to the cytoplasm. It carries out the reaction tRNA(Asx) + L-aspartate + ATP = L-aspartyl-tRNA(Asx) + AMP + diphosphate. Functionally, aspartyl-tRNA synthetase with relaxed tRNA specificity since it is able to aspartylate not only its cognate tRNA(Asp) but also tRNA(Asn). Reaction proceeds in two steps: L-aspartate is first activated by ATP to form Asp-AMP and then transferred to the acceptor end of tRNA(Asp/Asn). The polypeptide is Aspartate--tRNA(Asp/Asn) ligase (Cupriavidus taiwanensis (strain DSM 17343 / BCRC 17206 / CCUG 44338 / CIP 107171 / LMG 19424 / R1) (Ralstonia taiwanensis (strain LMG 19424))).